The sequence spans 328 residues: DNA polymerase III subunit delta' (328 aa).

DNA polymerase III contains a core (composed of alpha, epsilon and theta chains) that associates with a tau subunit. This core dimerizes to form the POLIII' complex. PolIII' associates with the gamma complex (composed of gamma, delta, delta', psi and chi chains) and with the beta chain to form the complete DNA polymerase III complex.

The enzyme catalyses DNA(n) + a 2'-deoxyribonucleoside 5'-triphosphate = DNA(n+1) + diphosphate. DNA polymerase III is a complex, multichain enzyme responsible for most of the replicative synthesis in bacteria. This DNA polymerase also exhibits 3' to 5' exonuclease activity. The sequence is that of DNA polymerase III subunit delta' (holB) from Pseudomonas aeruginosa (strain ATCC 15692 / DSM 22644 / CIP 104116 / JCM 14847 / LMG 12228 / 1C / PRS 101 / PAO1).